The primary structure comprises 244 residues: 5-oxoprolinase subunit A (244 aa).

This sequence belongs to the LamB/PxpA family. As to quaternary structure, forms a complex composed of PxpA, PxpB and PxpC.

It catalyses the reaction 5-oxo-L-proline + ATP + 2 H2O = L-glutamate + ADP + phosphate + H(+). Functionally, catalyzes the cleavage of 5-oxoproline to form L-glutamate coupled to the hydrolysis of ATP to ADP and inorganic phosphate. This is 5-oxoprolinase subunit A from Escherichia coli O17:K52:H18 (strain UMN026 / ExPEC).